The primary structure comprises 176 residues: NAD(P)H-quinone oxidoreductase subunit 6, chloroplastic (176 aa).

5 helical membrane passes run 10-30 (FLLV…VLLP), 32-52 (PIYS…FYIL), 61-81 (AQLL…VMFM), 92-112 (LWTV…ISLI), and 152-172 (FFLP…GAIA).

The protein belongs to the complex I subunit 6 family. In terms of assembly, NDH is composed of at least 16 different subunits, 5 of which are encoded in the nucleus.

It localises to the plastid. Its subcellular location is the chloroplast thylakoid membrane. It carries out the reaction a plastoquinone + NADH + (n+1) H(+)(in) = a plastoquinol + NAD(+) + n H(+)(out). The catalysed reaction is a plastoquinone + NADPH + (n+1) H(+)(in) = a plastoquinol + NADP(+) + n H(+)(out). Functionally, NDH shuttles electrons from NAD(P)H:plastoquinone, via FMN and iron-sulfur (Fe-S) centers, to quinones in the photosynthetic chain and possibly in a chloroplast respiratory chain. The immediate electron acceptor for the enzyme in this species is believed to be plastoquinone. Couples the redox reaction to proton translocation, and thus conserves the redox energy in a proton gradient. In Solanum tuberosum (Potato), this protein is NAD(P)H-quinone oxidoreductase subunit 6, chloroplastic (ndhG).